Consider the following 670-residue polypeptide: DNA ligase (670 aa).

NAD(+)-binding positions include 36–40 (DAQYD), 85–86 (SL), and Glu116. Lys118 (N6-AMP-lysine intermediate) is an active-site residue. Positions 139, 174, 290, and 314 each coordinate NAD(+). Zn(2+)-binding residues include Cys408, Cys411, Cys426, and Cys431. One can recognise a BRCT domain in the interval 591-670 (STDQTLSGKT…QDFVKLLQQQ (80 aa)).

The protein belongs to the NAD-dependent DNA ligase family. LigA subfamily. It depends on Mg(2+) as a cofactor. Mn(2+) is required as a cofactor.

It catalyses the reaction NAD(+) + (deoxyribonucleotide)n-3'-hydroxyl + 5'-phospho-(deoxyribonucleotide)m = (deoxyribonucleotide)n+m + AMP + beta-nicotinamide D-nucleotide.. Functionally, DNA ligase that catalyzes the formation of phosphodiester linkages between 5'-phosphoryl and 3'-hydroxyl groups in double-stranded DNA using NAD as a coenzyme and as the energy source for the reaction. It is essential for DNA replication and repair of damaged DNA. The polypeptide is DNA ligase (Desulforamulus reducens (strain ATCC BAA-1160 / DSM 100696 / MI-1) (Desulfotomaculum reducens)).